Reading from the N-terminus, the 215-residue chain is Cytochrome b-c1 complex subunit Rieske, mitochondrial (215 aa).

The transit peptide at 1–22 (MLGIRSSVKTCFKPMSLTSKRL) directs the protein to the mitochondrion. Positions 23 to 30 (ISQSLLAS) are cleaved as a propeptide — removed in mature form. Residues 31-50 (KSTYRTPNFDDVLKENNDAD) lie on the Mitochondrial matrix side of the membrane. The chain crosses the membrane as a helical span at residues 51 to 80 (KGRSYAYFMVGAMGLLSSAGAKSTVETFIS). Over 81–215 (SMTATADVLA…EFDGDKVIVG (135 aa)) the chain is Mitochondrial intermembrane. Positions 90-93 (AMAK) are hinge. The 92-residue stretch at 123–214 (PHEIQEANSV…YEFDGDKVIV (92 aa)) folds into the Rieske domain. Residues Cys159, His161, Cys178, and His181 each contribute to the [2Fe-2S] cluster site. Cysteines 164 and 180 form a disulfide.

Belongs to the Rieske iron-sulfur protein family. Component of the ubiquinol-cytochrome c oxidoreductase (cytochrome b-c1 complex, complex III, CIII), a multisubunit enzyme composed of 10 subunits. The complex is composed of 3 respiratory subunits cytochrome b (COB), cytochrome c1 (CYT1) and Rieske protein (RIP1), 2 core protein subunits COR1 and QCR2, and 5 low-molecular weight protein subunits QCR6, QCR7, QCR8, QCR9 and QCR10. The complex exists as an obligatory dimer and forms supercomplexes (SCs) in the inner mitochondrial membrane with a monomer or a dimer of cytochrome c oxidase (complex IV, CIV), resulting in 2 different assemblies (supercomplexes III(2)IV and III(2)IV(2)). RIP1 interacts with QCR10 on the intermembrane space (IMS) side, and with QCR9. It depends on [2Fe-2S] cluster as a cofactor. Post-translationally, processed by both the mitochondrial processing peptidase (MPP) and the mitochondrial intermediate protease (MIP). Initially, MPP removes 22 amino acids from the newly imported precursor in the mitochondrial matrix. This proteolytic processing is then followed by a second proteolytic cleavage by MIP, which removes an octapeptide to generate mature-sized RIP1.

It is found in the mitochondrion inner membrane. The enzyme catalyses a quinol + 2 Fe(III)-[cytochrome c](out) = a quinone + 2 Fe(II)-[cytochrome c](out) + 2 H(+)(out). Its function is as follows. Component of the ubiquinol-cytochrome c oxidoreductase, a multisubunit transmembrane complex that is part of the mitochondrial electron transport chain which drives oxidative phosphorylation. The respiratory chain contains 3 multisubunit complexes succinate dehydrogenase (complex II, CII), ubiquinol-cytochrome c oxidoreductase (cytochrome b-c1 complex, complex III, CIII) and cytochrome c oxidase (complex IV, CIV), that cooperate to transfer electrons derived from NADH and succinate to molecular oxygen, creating an electrochemical gradient over the inner membrane that drives transmembrane transport and the ATP synthase. The cytochrome b-c1 complex catalyzes electron transfer from ubiquinol to cytochrome c, linking this redox reaction to translocation of protons across the mitochondrial inner membrane, with protons being carried across the membrane as hydrogens on the quinol. In the process called Q cycle, 2 protons are consumed from the matrix, 4 protons are released into the intermembrane space and 2 electrons are passed to cytochrome c. The Rieske protein is a catalytic core subunit containing a [2Fe-2S] iron-sulfur cluster. It cycles between 2 conformational states during catalysis to transfer electrons from the quinol bound in the Q(0) site in cytochrome b (COB) to cytochrome c1 (CYT1). This is Cytochrome b-c1 complex subunit Rieske, mitochondrial (RIP1) from Saccharomyces cerevisiae (strain ATCC 204508 / S288c) (Baker's yeast).